The sequence spans 144 residues: Putative pre-16S rRNA nuclease (144 aa).

It belongs to the YqgF nuclease family.

The protein resides in the cytoplasm. Its function is as follows. Could be a nuclease involved in processing of the 5'-end of pre-16S rRNA. This chain is Putative pre-16S rRNA nuclease, found in Ralstonia nicotianae (strain ATCC BAA-1114 / GMI1000) (Ralstonia solanacearum).